Reading from the N-terminus, the 406-residue chain is Argininosuccinate synthase (406 aa).

ATP contacts are provided by residues 11 to 19 and alanine 38; that span reads AYSGGLDTS. Residues tyrosine 91 and serine 96 each coordinate L-citrulline. Glycine 121 provides a ligand contact to ATP. Residues threonine 123, asparagine 127, and aspartate 128 each contribute to the L-aspartate site. Asparagine 127 serves as a coordination point for L-citrulline. Arginine 131, serine 181, serine 190, glutamate 266, and tyrosine 278 together coordinate L-citrulline.

This sequence belongs to the argininosuccinate synthase family. Type 1 subfamily. As to quaternary structure, homotetramer.

It is found in the cytoplasm. It carries out the reaction L-citrulline + L-aspartate + ATP = 2-(N(omega)-L-arginino)succinate + AMP + diphosphate + H(+). It participates in amino-acid biosynthesis; L-arginine biosynthesis; L-arginine from L-ornithine and carbamoyl phosphate: step 2/3. The sequence is that of Argininosuccinate synthase from Campylobacter jejuni subsp. jejuni serotype O:6 (strain 81116 / NCTC 11828).